We begin with the raw amino-acid sequence, 241 residues long: Carboxy-S-adenosyl-L-methionine synthase (241 aa).

Residues Tyr-38, 63-65 (GCS), 88-89 (DN), 116-117 (DI), Asn-131, and Arg-198 each bind S-adenosyl-L-methionine.

The protein belongs to the class I-like SAM-binding methyltransferase superfamily. Cx-SAM synthase family. As to quaternary structure, homodimer.

The enzyme catalyses prephenate + S-adenosyl-L-methionine = carboxy-S-adenosyl-L-methionine + 3-phenylpyruvate + H2O. Its function is as follows. Catalyzes the conversion of S-adenosyl-L-methionine (SAM) to carboxy-S-adenosyl-L-methionine (Cx-SAM). In Actinobacillus pleuropneumoniae serotype 7 (strain AP76), this protein is Carboxy-S-adenosyl-L-methionine synthase.